The following is a 1901-amino-acid chain: Protein TIC 214 (1901 aa).

6 consecutive transmembrane segments (helical) span residues 18-38 (IINS…FSIG), 64-84 (FITG…HLAL), 87-107 (PHTI…WNNH), 124-144 (LSIQ…HFIL), 172-192 (VGWL…LVWI), and 221-241 (IFSI…PSPI). Disordered stretches follow at residues 248–299 (EASK…EERW), 797–817 (REEQ…ENKR), and 1591–1618 (IQEA…LGPV). Positions 256-268 (VESEEERDVEIET) are enriched in acidic residues. A compositionally biased stretch (basic and acidic residues) spans 1591–1611 (IQEAKEPASQGEKERGSDIEN).

This sequence belongs to the TIC214 family. As to quaternary structure, part of the Tic complex.

It localises to the plastid. Its subcellular location is the chloroplast inner membrane. In terms of biological role, involved in protein precursor import into chloroplasts. May be part of an intermediate translocation complex acting as a protein-conducting channel at the inner envelope. The polypeptide is Protein TIC 214 (Nicotiana sylvestris (Wood tobacco)).